A 280-amino-acid chain; its full sequence is MSTHFLGKVKFDEARLAEDLSTLEVAEFSSAYSDFACGKWEACVLRNRTGMQEEDIVVSHNAPALATPLSKSLPYLNELVETHFDCSAVRYTRIVRVSENACIIPHSDYLELDETFTRLHLVLDTNSGCANTEEDKIFHMGLGEIWFLDAMLPHSAACFSKTPRLHLMIDFEATAFPESFLRNVEQPVTTRDMVDPRKELTDEVIEGILGFSIIISEANYREIVSILAKLHFFYKADCRSMYDWLKEICKRRGDPALIEKTASLERFFLGHRERGEVMTY.

Fe cation contacts are provided by His106, Asp108, and His154. Arg164 serves as a coordination point for 2-oxoglutarate.

The protein belongs to the L-proline cis-4-/cis-3-hydroxylase family. Requires Fe(2+) as cofactor.

The catalysed reaction is L-proline + 2-oxoglutarate + O2 = cis-4-hydroxy-L-proline + succinate + CO2. With respect to regulation, inhibited by metal ions such as Co(2+), Zn(2+), Cu(2+) or Ni(2+). Is also inhibited by EDTA or diethylpyrocarbonate (DEPC) in vitro. Unlike the procollagen-proline cis-3- and trans-4-hydroxylases from mammals, does not necessarily require L-ascorbate for activity although it does increase the activity of the enzyme. Its function is as follows. Dioxygenase that catalyzes the 2-oxoglutarate-dependent selective hydroxylation of free L-proline to cis-4-hydroxy-L-proline (cis-4-Hyp). This chain is L-proline cis-4-hydroxylase, found in Rhizobium meliloti (strain 1021) (Ensifer meliloti).